The primary structure comprises 39 residues: Photosystem II reaction center protein J (39 aa).

The helical transmembrane segment at 7 to 27 threads the bilayer; the sequence is IPLWLVATIGGIAVLTVLGLF.

It belongs to the PsbJ family. In terms of assembly, PSII is composed of 1 copy each of membrane proteins PsbA, PsbB, PsbC, PsbD, PsbE, PsbF, PsbH, PsbI, PsbJ, PsbK, PsbL, PsbM, PsbT, PsbX, PsbY, PsbZ, Psb30/Ycf12, at least 3 peripheral proteins of the oxygen-evolving complex and a large number of cofactors. It forms dimeric complexes.

It localises to the plastid. The protein localises to the chloroplast thylakoid membrane. In terms of biological role, one of the components of the core complex of photosystem II (PSII). PSII is a light-driven water:plastoquinone oxidoreductase that uses light energy to abstract electrons from H(2)O, generating O(2) and a proton gradient subsequently used for ATP formation. It consists of a core antenna complex that captures photons, and an electron transfer chain that converts photonic excitation into a charge separation. In Cyanidioschyzon merolae (strain NIES-3377 / 10D) (Unicellular red alga), this protein is Photosystem II reaction center protein J.